Reading from the N-terminus, the 325-residue chain is Deoxyhypusine hydroxylase (325 aa).

At serine 2 the chain carries N-acetylserine. HEAT-like PBS-type repeat units lie at residues 77–103 (LKHE…VMLD) and 110–136 (VRHE…AAKE). Fe cation contacts are provided by histidine 79, glutamate 80, histidine 112, and glutamate 113. Serine 126 is subject to Phosphoserine. At threonine 187 the chain carries Phosphothreonine. HEAT-like PBS-type repeat units follow at residues 202–231 (LFQR…FSAE), 235–261 (FKHE…VLGR), and 268–294 (VRHE…YLND). Fe cation contacts are provided by histidine 237, glutamate 238, histidine 270, and glutamate 271. Serine 281 is subject to Phosphoserine.

It belongs to the deoxyhypusine hydroxylase family. It depends on Fe(2+) as a cofactor.

The protein resides in the cytoplasm. It is found in the nucleus. The enzyme catalyses [eIF5A protein]-deoxyhypusine + AH2 + O2 = [eIF5A protein]-hypusine + A + H2O. It participates in protein modification; eIF5A hypusination. Functionally, catalyzes the hydroxylation of the N(6)-(4-aminobutyl)-L-lysine intermediate to form hypusine, an essential post-translational modification only found in mature eIF-5A factor. In Saccharomyces cerevisiae (strain ATCC 204508 / S288c) (Baker's yeast), this protein is Deoxyhypusine hydroxylase.